A 188-amino-acid polypeptide reads, in one-letter code: Shikimate kinase (188 aa).

21–26 contributes to the ATP binding site; that stretch reads GAGKTT. Residue Thr-25 participates in Mg(2+) binding. Substrate is bound by residues Asp-43, Arg-67, and Gly-90. Residue Arg-130 participates in ATP binding. Position 148 (Arg-148) interacts with substrate.

The protein belongs to the shikimate kinase family. In terms of assembly, monomer. Mg(2+) serves as cofactor.

The protein localises to the cytoplasm. The enzyme catalyses shikimate + ATP = 3-phosphoshikimate + ADP + H(+). It participates in metabolic intermediate biosynthesis; chorismate biosynthesis; chorismate from D-erythrose 4-phosphate and phosphoenolpyruvate: step 5/7. Catalyzes the specific phosphorylation of the 3-hydroxyl group of shikimic acid using ATP as a cosubstrate. This Geobacillus kaustophilus (strain HTA426) protein is Shikimate kinase.